The chain runs to 174 residues: Male-enhanced antigen 1 (174 aa).

2 disordered regions span residues 1–83 and 95–123; these read MAAV…DGAA and HLPD…IPMD. Composition is skewed to acidic residues over residues 38-48, 65-82, and 101-110; these read SSEEPEEEQEE, PEQE…EDGA, and LESEDEDEEG. Serine 103 carries the phosphoserine modification.

Highly expressed in testis. Transcripts can be found in primary and secondary spermatocytes, and spermatids, but the protein itself is only detected in spermatids. No expression in Leydig cells, spermatogonia, or sperm. Very weak expression in the heart, kidney, spleen, thymus and ovary.

In terms of biological role, may play an important role in spermatogenesis and/or testis development. The protein is Male-enhanced antigen 1 (Mea1) of Mus musculus (Mouse).